We begin with the raw amino-acid sequence, 323 residues long: Transmembrane protein 171 (323 aa).

Helical transmembrane passes span 22 to 42 (IFFLFVFGAVLLCVGVLISIF), 57 to 77 (MVLKIAGPSCAVMGLGTVILA), 112 to 132 (LIFGFLFLTSGMLISILGIWV), and 159 to 179 (FLSLQIMGPLIVLVGLCFFVV). Over residues 251 to 268 (YSSLFNLSRTPTPENQGA) the composition is skewed to polar residues. A disordered region spans residues 251–323 (YSSLFNLSRT…LGAPSESSPP (73 aa)). The span at 281-290 (SGPGSSSESS) shows a compositional bias: low complexity.

Its subcellular location is the membrane. In Rattus norvegicus (Rat), this protein is Transmembrane protein 171 (Tmem171).